Reading from the N-terminus, the 145-residue chain is Internal scaffolding protein VP3 (145 aa).

It belongs to the microviridae B protein family.

It localises to the host cytoplasm. In terms of biological role, participates in the assembly of the viral procapsid in the cytoplasm. Released from the procapsid upon genome packaging, possibly through affinity displacement by the protein ORF8, or by proteolysis. In Chlamydia phage 1 (Bacteriophage Chp1), this protein is Internal scaffolding protein VP3.